Consider the following 529-residue polypeptide: Peptide chain release factor 3 (529 aa).

The tr-type G domain maps to 11–280; it reads AKRRTFAIIS…GLVAWAPAPM (270 aa). GTP-binding positions include 20–27, 88–92, and 142–145; these read SHPDAGKT, DTPGH, and NKLD.

This sequence belongs to the TRAFAC class translation factor GTPase superfamily. Classic translation factor GTPase family. PrfC subfamily.

The protein localises to the cytoplasm. Functionally, increases the formation of ribosomal termination complexes and stimulates activities of RF-1 and RF-2. It binds guanine nucleotides and has strong preference for UGA stop codons. It may interact directly with the ribosome. The stimulation of RF-1 and RF-2 is significantly reduced by GTP and GDP, but not by GMP. The sequence is that of Peptide chain release factor 3 from Salmonella gallinarum (strain 287/91 / NCTC 13346).